Consider the following 273-residue polypeptide: MLKLLLLTLPLLSSLVHAAPSLAMPREGIVGGQEASGNKWPWQVSLRVNDTYWMHFCGGSLIHPQWVLTAAHCVGPNKADPNKLRVQLRKQYLYYHDHLLTVSQIISHPDFYIAQDGADIALLKLTNPVNITSNVHTVSLPPASETFPSGTLCWVTGWGNINNDVSLPPPFPLEEVQVPIVENRLCDLKYHKGLNTGDNVHIVRDDMLCAGNEGHDSCQGDSGGPLVCKVEDTWLQAGVVSWGEGCAQPNRPGIYTRVTYYLDWIYRYVPKYF.

A signal peptide spans 1–18; that stretch reads MLKLLLLTLPLLSSLVHA. Positions 19–28 are cleaved as a propeptide — activation peptide; sequence APSLAMPREG. Positions 29 to 270 constitute a Peptidase S1 domain; that stretch reads IVGGQEASGN…YLDWIYRYVP (242 aa). N-linked (GlcNAc...) asparagine glycosylation occurs at asparagine 49. Residues cysteine 57 and cysteine 73 are joined by a disulfide bond. Catalysis depends on charge relay system residues histidine 72 and aspartate 119. Intrachain disulfides connect cysteine 153/cysteine 228, cysteine 186/cysteine 209, and cysteine 218/cysteine 246. Serine 222 acts as the Charge relay system in catalysis.

Belongs to the peptidase S1 family. Tryptase subfamily. Homotetramer. In terms of processing, glycosylated. As to expression, mast cells.

It localises to the secreted. The enzyme catalyses Preferential cleavage: Arg-|-Xaa, Lys-|-Xaa, but with more restricted specificity than trypsin.. Functionally, tryptase is the major neutral protease present in mast cells and is secreted upon the coupled activation-degranulation response of this cell type. May play a role in innate immunity. This chain is Tryptase (Tpsab1), found in Rattus norvegicus (Rat).